We begin with the raw amino-acid sequence, 437 residues long: Aminopeptidase W (437 aa).

Catalysis depends on residues Cys70, His361, and Asn382.

It belongs to the peptidase C1 family.

It is found in the cytoplasm. The chain is Aminopeptidase W (pepW) from Lactobacillus delbrueckii subsp. lactis.